The following is a 453-amino-acid chain: Ribulose bisphosphate carboxylase large chain (453 aa).

A propeptide spanning residues 1 to 2 (MS) is cleaved from the precursor. The residue at position 3 (Pro3) is an N-acetylproline. Residue Lys14 is modified to N6,N6,N6-trimethyllysine. Residues Asn123 and Thr173 each coordinate substrate. The active-site Proton acceptor is the Lys175. Lys177 contributes to the substrate binding site. Mg(2+) is bound by residues Lys201, Asp203, and Glu204. An N6-carboxylysine modification is found at Lys201. The Proton acceptor role is filled by His294. Residues Arg295, His327, and Ser379 each coordinate substrate.

It belongs to the RuBisCO large chain family. Type I subfamily. In terms of assembly, heterohexadecamer of 8 large chains and 8 small chains; disulfide-linked. The disulfide link is formed within the large subunit homodimers. Mg(2+) serves as cofactor. In terms of processing, the disulfide bond which can form in the large chain dimeric partners within the hexadecamer appears to be associated with oxidative stress and protein turnover.

The protein resides in the plastid. The protein localises to the chloroplast. It carries out the reaction 2 (2R)-3-phosphoglycerate + 2 H(+) = D-ribulose 1,5-bisphosphate + CO2 + H2O. The enzyme catalyses D-ribulose 1,5-bisphosphate + O2 = 2-phosphoglycolate + (2R)-3-phosphoglycerate + 2 H(+). RuBisCO catalyzes two reactions: the carboxylation of D-ribulose 1,5-bisphosphate, the primary event in carbon dioxide fixation, as well as the oxidative fragmentation of the pentose substrate in the photorespiration process. Both reactions occur simultaneously and in competition at the same active site. The polypeptide is Ribulose bisphosphate carboxylase large chain (Galium palustre (Common marsh bedstraw)).